We begin with the raw amino-acid sequence, 107 residues long: Sperm-specific class P protein 31 (107 aa).

Residues 1–107 enclose the MSP domain; the sequence is MINIDPPSGD…GEVVVKMVAS (107 aa).

As to expression, expressed at higher level in testis.

The sequence is that of Sperm-specific class P protein 31 (ssp-31) from Caenorhabditis elegans.